Here is a 634-residue protein sequence, read N- to C-terminus: Chaperone protein HtpG (634 aa).

An a; substrate-binding region spans residues 1–342; sequence MSVETQKETL…SNDLSLNVSR (342 aa). Residues 343–559 are b; sequence EILQKDPIID…EQDLGLQMRQ (217 aa). Positions 560–634 are c; that stretch reads ILEASGQKVP…LNKLLVELSV (75 aa).

It belongs to the heat shock protein 90 family. In terms of assembly, homodimer.

The protein resides in the cytoplasm. Molecular chaperone. Has ATPase activity. The chain is Chaperone protein HtpG from Pseudomonas fluorescens (strain ATCC BAA-477 / NRRL B-23932 / Pf-5).